The chain runs to 284 residues: Shikimate dehydrogenase (NADP(+)) (284 aa).

Residues 19–21 and threonine 66 each bind shikimate; that span reads SFS. Catalysis depends on lysine 70, which acts as the Proton acceptor. Residue aspartate 82 participates in NADP(+) binding. The shikimate site is built by asparagine 91 and aspartate 106. NADP(+) is bound by residues 130 to 134 and isoleucine 226; that span reads GSGGS. Tyrosine 228 lines the shikimate pocket. Glycine 249 serves as a coordination point for NADP(+).

It belongs to the shikimate dehydrogenase family. As to quaternary structure, homodimer.

The catalysed reaction is shikimate + NADP(+) = 3-dehydroshikimate + NADPH + H(+). It functions in the pathway metabolic intermediate biosynthesis; chorismate biosynthesis; chorismate from D-erythrose 4-phosphate and phosphoenolpyruvate: step 4/7. Functionally, involved in the biosynthesis of the chorismate, which leads to the biosynthesis of aromatic amino acids. Catalyzes the reversible NADPH linked reduction of 3-dehydroshikimate (DHSA) to yield shikimate (SA). The chain is Shikimate dehydrogenase (NADP(+)) from Methanococcus vannielii (strain ATCC 35089 / DSM 1224 / JCM 13029 / OCM 148 / SB).